Consider the following 469-residue polypeptide: Putative dipeptidase MW1694 (469 aa).

Residue His-84 participates in Zn(2+) binding. Residue Asp-86 is part of the active site. Asp-115 lines the Zn(2+) pocket. The active-site Proton acceptor is Glu-149. Zn(2+)-binding residues include Glu-150, Asp-173, and His-440.

The protein belongs to the peptidase M20A family. The cofactor is Zn(2+).

The polypeptide is Putative dipeptidase MW1694 (Staphylococcus aureus (strain MW2)).